The following is a 675-amino-acid chain: Alpha-1,4-glucan:maltose-1-phosphate maltosyltransferase 1 (675 aa).

Lys-264, Gln-324, and Asp-359 together coordinate alpha-maltose 1-phosphate. Catalysis depends on Asp-394, which acts as the Nucleophile. An alpha-maltose 1-phosphate-binding site is contributed by Asn-395. The Proton donor role is filled by Glu-423. Residue 534-535 participates in alpha-maltose 1-phosphate binding; the sequence is KY.

Belongs to the glycosyl hydrolase 13 family. GlgE subfamily. Homodimer.

The catalysed reaction is alpha-maltose 1-phosphate + [(1-&gt;4)-alpha-D-glucosyl](n) = [(1-&gt;4)-alpha-D-glucosyl](n+2) + phosphate. Is competitively inhibited by alpha-, beta- and gamma-cyclodextrins (cyclic maltooligosaccharides), unlike GlgE from M.tuberculosis. In terms of biological role, maltosyltransferase that uses maltose 1-phosphate (M1P) as the sugar donor to elongate linear or branched alpha-(1-&gt;4)-glucans. Maltooligosaccharides with a degree of polymerization (DP) superior or equal to 4 are efficient acceptors, with DP6 being optimal in the GlgE-catalyzed polymerization with M1P. Is specific for the alpha-anomer of M1P as substrate, since the beta-anomer of M1P gives no activity. Alpha-D-glucose 1-phosphate cannot serve as a donor substrate, but alpha-maltosyl fluoride is an efficient donor in vitro. Exhibits an alpha-retaining catalytic mechanism, with evidence that maltooligosaccharide acceptors are extended at their non-reducing ends. Is also able to catalyze the reverse reaction in vitro, releasing M1P from glycogen or maltoheptaose in the presence of inorganic phosphate. Also catalyzes disproportionation reactions through maltosyl transfer between maltooligosaccharides. Is probably involved in a branched alpha-glucan biosynthetic pathway from trehalose, together with TreS, Mak and GlgB. This chain is Alpha-1,4-glucan:maltose-1-phosphate maltosyltransferase 1 (glgE1), found in Streptomyces coelicolor (strain ATCC BAA-471 / A3(2) / M145).